Here is a 290-residue protein sequence, read N- to C-terminus: Ribosomal protein L11 methyltransferase (290 aa).

Positions 136, 159, 181, and 228 each coordinate S-adenosyl-L-methionine.

This sequence belongs to the methyltransferase superfamily. PrmA family.

The protein resides in the cytoplasm. The catalysed reaction is L-lysyl-[protein] + 3 S-adenosyl-L-methionine = N(6),N(6),N(6)-trimethyl-L-lysyl-[protein] + 3 S-adenosyl-L-homocysteine + 3 H(+). In terms of biological role, methylates ribosomal protein L11. The chain is Ribosomal protein L11 methyltransferase from Allorhizobium ampelinum (strain ATCC BAA-846 / DSM 112012 / S4) (Agrobacterium vitis (strain S4)).